Here is a 156-residue protein sequence, read N- to C-terminus: Small ribosomal subunit protein uS7 (156 aa).

Belongs to the universal ribosomal protein uS7 family. As to quaternary structure, part of the 30S ribosomal subunit. Contacts proteins S9 and S11.

In terms of biological role, one of the primary rRNA binding proteins, it binds directly to 16S rRNA where it nucleates assembly of the head domain of the 30S subunit. Is located at the subunit interface close to the decoding center, probably blocks exit of the E-site tRNA. This is Small ribosomal subunit protein uS7 from Roseobacter denitrificans (strain ATCC 33942 / OCh 114) (Erythrobacter sp. (strain OCh 114)).